Consider the following 305-residue polypeptide: Protoheme IX farnesyltransferase (305 aa).

9 helical membrane passes run 31–51 (VMSL…YSVH), 52–72 (PFIA…AGAI), 96–118 (VIES…FFMA), 123–145 (LLAS…IWLK), 151–171 (NIVI…AAVS), 179–199 (IILF…LALF), 225–245 (ILIY…IGMN), 247–267 (FIYL…AGSL), and 281–301 (FAYS…TNTI).

This sequence belongs to the UbiA prenyltransferase family. Protoheme IX farnesyltransferase subfamily.

The protein localises to the cell inner membrane. The enzyme catalyses heme b + (2E,6E)-farnesyl diphosphate + H2O = Fe(II)-heme o + diphosphate. It functions in the pathway porphyrin-containing compound metabolism; heme O biosynthesis; heme O from protoheme: step 1/1. In terms of biological role, converts heme B (protoheme IX) to heme O by substitution of the vinyl group on carbon 2 of heme B porphyrin ring with a hydroxyethyl farnesyl side group. The polypeptide is Protoheme IX farnesyltransferase (Rickettsia rickettsii (strain Iowa)).